A 312-amino-acid chain; its full sequence is Olfactory receptor 7D4 (312 aa).

Residues 1 to 25 (MEAENLTELSKFLLLGLSDDPELQP) are Extracellular-facing. N-linked (GlcNAc...) asparagine glycosylation occurs at Asn-5. The chain crosses the membrane as a helical span at residues 26–46 (VLFGLFLSMYLVTVLGNLLII). Residues 47–54 (LAVSSDSH) are Cytoplasmic-facing. Residues 55–75 (LHTPMYFFLSNLSFVDICFIS) form a helical membrane-spanning segment. Topologically, residues 76–99 (TTVPKMLVSIQARSKDISYMGCLT) are extracellular. Cysteines 97 and 189 form a disulfide. Residues 100–120 (QVYFLMMFAGMDTFLLAVMAY) traverse the membrane as a helical segment. Residues 121–139 (DRFVAICHPLHYTVIMNPC) lie on the Cytoplasmic side of the membrane. The helical transmembrane segment at 140–160 (LCGLLVLASWFIIFWFSLVHI) threads the bilayer. The Extracellular segment spans residues 161–197 (LLMKRLTFSTGTEIPHFFCEPAQVLKVACSNTLLNNI). A helical transmembrane segment spans residues 198–217 (VLYVATALLGVFPVAGILFS). Topologically, residues 218–237 (YSQIVSSLMGMSSTKGKYKA) are cytoplasmic. The chain crosses the membrane as a helical span at residues 238-258 (FSTCGSHLCVVSLFYGTGLGV). The Extracellular segment spans residues 259–271 (YLSSAVTHSSQSS). A helical membrane pass occupies residues 272–292 (STASVMYAMVTPMLNPFIYSL). The Cytoplasmic portion of the chain corresponds to 293-312 (RNKDVKGALERLLSRADSCP).

This sequence belongs to the G-protein coupled receptor 1 family. As to expression, nasal olfactory epithelium.

The protein localises to the cell membrane. Functionally, odorant receptor. Selectively activated by androstenone and the related odorous steroid androstadienone. In Homo sapiens (Human), this protein is Olfactory receptor 7D4 (OR7D4).